A 307-amino-acid polypeptide reads, in one-letter code: MTSKLEQLKQYTTVVADTGDFDAIARLKPVDATTNPSLLLKAAALPRYAEHLRQATAGSGGDAGLACDRFAVAVGKDILGVIPGRISTEVDARLSFDSEATLARAHRLIELYDEQGIDRERVLIKIASTWEGIRAAEILEREGIQTNLTLLFSFAQAVACADAGVFLISPFVGRIYDWYKKSENRDYVGAEDPGVQSVSRIYRYYKANGYKTVVMGASFRNLGQIEQLAGCDRLTISPDLLQQLADAQGELPRLLLPGEGEPRQVLDESTFRWQMNEDAMATEKLAEGIRLFARDQEKLEYQLATRH.

The Schiff-base intermediate with substrate role is filled by Lys125.

It belongs to the transaldolase family. Type 1 subfamily. Homodimer.

It is found in the cytoplasm. It catalyses the reaction D-sedoheptulose 7-phosphate + D-glyceraldehyde 3-phosphate = D-erythrose 4-phosphate + beta-D-fructose 6-phosphate. Its pathway is carbohydrate degradation; pentose phosphate pathway; D-glyceraldehyde 3-phosphate and beta-D-fructose 6-phosphate from D-ribose 5-phosphate and D-xylulose 5-phosphate (non-oxidative stage): step 2/3. Transaldolase is important for the balance of metabolites in the pentose-phosphate pathway. The protein is Transaldolase of Pseudomonas aeruginosa (strain LESB58).